The chain runs to 358 residues: Peptide chain release factor 1 (358 aa).

Q233 bears the N5-methylglutamine mark.

Belongs to the prokaryotic/mitochondrial release factor family. Methylated by PrmC. Methylation increases the termination efficiency of RF1.

The protein resides in the cytoplasm. In terms of biological role, peptide chain release factor 1 directs the termination of translation in response to the peptide chain termination codons UAG and UAA. The chain is Peptide chain release factor 1 from Lachnoclostridium phytofermentans (strain ATCC 700394 / DSM 18823 / ISDg) (Clostridium phytofermentans).